The following is a 484-amino-acid chain: UDP-glycosyltransferase 73B4 (484 aa).

Catalysis depends on His18, which acts as the Proton acceptor. An anthocyanidin-binding residues include His18 and Asn89. Asp129 serves as the catalytic Charge relay. 7 residues coordinate UDP-alpha-D-glucose: Ala356, Gln358, His373, Trp376, Asn377, Ser378, and Glu381. Position 396 (Ala396) interacts with an anthocyanidin. Positions 397 and 398 each coordinate UDP-alpha-D-glucose.

Belongs to the UDP-glycosyltransferase family. As to expression, specifically expressed in roots.

The enzyme catalyses a flavonol + UDP-alpha-D-glucose = a flavonol 3-O-beta-D-glucoside + UDP + H(+). Possesses quercetin 3-O-glucosyltransferase and low 7-O-glucosyltransferase activities in vitro. Also active in vitro on benzoates and benzoate derivatives. Can detoxify the explosive 2,4,6-trinitrotoluene in plant by forming O- or C-glucose conjugates. The polypeptide is UDP-glycosyltransferase 73B4 (UGT73B4) (Arabidopsis thaliana (Mouse-ear cress)).